The chain runs to 247 residues: Carboxy-S-adenosyl-L-methionine synthase (247 aa).

S-adenosyl-L-methionine is bound by residues Y39, 64 to 66 (GCS), 89 to 90 (DN), 117 to 118 (DI), N132, and R199.

It belongs to the class I-like SAM-binding methyltransferase superfamily. Cx-SAM synthase family. As to quaternary structure, homodimer.

It catalyses the reaction prephenate + S-adenosyl-L-methionine = carboxy-S-adenosyl-L-methionine + 3-phenylpyruvate + H2O. Functionally, catalyzes the conversion of S-adenosyl-L-methionine (SAM) to carboxy-S-adenosyl-L-methionine (Cx-SAM). In Escherichia coli O139:H28 (strain E24377A / ETEC), this protein is Carboxy-S-adenosyl-L-methionine synthase.